The chain runs to 259 residues: Phosphatidylglycerol--prolipoprotein diacylglyceryl transferase (259 aa).

Helical transmembrane passes span 10 to 30 (IGLL…LFAY), 50 to 70 (IISW…ILFY), 86 to 106 (WKGG…MYIF), and 112 to 132 (IKFL…IFLG). Residue arginine 133 coordinates a 1,2-diacyl-sn-glycero-3-phospho-(1'-sn-glycerol). 3 helical membrane passes run 169 to 189 (LYEA…LFFF), 197 to 217 (GMLF…IEFV), and 227 to 247 (ILFN…ILGI).

The protein belongs to the Lgt family.

The protein resides in the cell inner membrane. The catalysed reaction is L-cysteinyl-[prolipoprotein] + a 1,2-diacyl-sn-glycero-3-phospho-(1'-sn-glycerol) = an S-1,2-diacyl-sn-glyceryl-L-cysteinyl-[prolipoprotein] + sn-glycerol 1-phosphate + H(+). Its pathway is protein modification; lipoprotein biosynthesis (diacylglyceryl transfer). Its function is as follows. Catalyzes the transfer of the diacylglyceryl group from phosphatidylglycerol to the sulfhydryl group of the N-terminal cysteine of a prolipoprotein, the first step in the formation of mature lipoproteins. The protein is Phosphatidylglycerol--prolipoprotein diacylglyceryl transferase of Ehrlichia ruminantium (strain Welgevonden).